Reading from the N-terminus, the 412-residue chain is Putative competence-damage inducible protein (412 aa).

The protein belongs to the CinA family.

This is Putative competence-damage inducible protein from Clostridium perfringens (strain 13 / Type A).